A 382-amino-acid chain; its full sequence is Alkanesulfonate monooxygenase (382 aa).

It belongs to the SsuD family.

It carries out the reaction an alkanesulfonate + FMNH2 + O2 = an aldehyde + FMN + sulfite + H2O + 2 H(+). In terms of biological role, catalyzes the desulfonation of aliphatic sulfonates. The polypeptide is Alkanesulfonate monooxygenase (Pseudomonas putida (strain GB-1)).